A 252-amino-acid chain; its full sequence is Putative cytosolic acyl coenzyme A thioester hydrolase-like (252 aa).

2 consecutive HotDog ACOT-type domains span residues 1-90 (MIKE…LSLT) and 146-252 (SYSQ…SVFT).

In terms of assembly, homodimer. In terms of tissue distribution, expressed in all tissues examined. Up-regulated in nasopharyngeal carcinoma (at protein level).

The protein localises to the cytoplasm. The enzyme catalyses hexadecanoyl-CoA + H2O = hexadecanoate + CoA + H(+). In terms of biological role, acyl-CoA thioesterases are a group of enzymes that catalyze the hydrolysis of acyl-CoAs to the free fatty acid and coenzyme A (CoASH), providing the potential to regulate intracellular levels of acyl-CoAs, free fatty acids and CoASH. The sequence is that of Putative cytosolic acyl coenzyme A thioester hydrolase-like (ACOT7L) from Homo sapiens (Human).